A 179-amino-acid chain; its full sequence is MARLKDYYQKELVAKLKTELGLDNIMEVPAIKKITLNMGVGDAAKDKKIMTFALNDLTAIAGQKPVVTKSKKSIAGFKIRDGWPIGAKVTLRGDRMYEFLDRLITIAIPRIRDFRGLSAKSFDGRGNYSLGMREQISFPEIDYDKVDSIRGLDISITTTAKNDDQGRALLKAFGFPFKS.

The protein belongs to the universal ribosomal protein uL5 family. As to quaternary structure, part of the 50S ribosomal subunit; part of the 5S rRNA/L5/L18/L25 subcomplex. Contacts the 5S rRNA and the P site tRNA. Forms a bridge to the 30S subunit in the 70S ribosome.

Functionally, this is one of the proteins that bind and probably mediate the attachment of the 5S RNA into the large ribosomal subunit, where it forms part of the central protuberance. In the 70S ribosome it contacts protein S13 of the 30S subunit (bridge B1b), connecting the 2 subunits; this bridge is implicated in subunit movement. Contacts the P site tRNA; the 5S rRNA and some of its associated proteins might help stabilize positioning of ribosome-bound tRNAs. The chain is Large ribosomal subunit protein uL5 from Francisella tularensis subsp. novicida (strain U112).